The following is a 331-amino-acid chain: 6-phosphogluconolactonase (331 aa).

It belongs to the cycloisomerase 2 family.

The catalysed reaction is 6-phospho-D-glucono-1,5-lactone + H2O = 6-phospho-D-gluconate + H(+). It participates in carbohydrate degradation; pentose phosphate pathway; D-ribulose 5-phosphate from D-glucose 6-phosphate (oxidative stage): step 2/3. Functionally, catalyzes the hydrolysis of 6-phosphogluconolactone to 6-phosphogluconate. The sequence is that of 6-phosphogluconolactonase from Klebsiella pneumoniae subsp. pneumoniae (strain ATCC 700721 / MGH 78578).